The sequence spans 199 residues: Holliday junction resolvase RecU (199 aa).

Mg(2+) is bound by residues T82, D84, E97, and Q116.

This sequence belongs to the RecU family. Requires Mg(2+) as cofactor.

It is found in the cytoplasm. It carries out the reaction Endonucleolytic cleavage at a junction such as a reciprocal single-stranded crossover between two homologous DNA duplexes (Holliday junction).. In terms of biological role, endonuclease that resolves Holliday junction intermediates in genetic recombination. Cleaves mobile four-strand junctions by introducing symmetrical nicks in paired strands. Promotes annealing of linear ssDNA with homologous dsDNA. Required for DNA repair, homologous recombination and chromosome segregation. The protein is Holliday junction resolvase RecU of Streptococcus pyogenes serotype M1.